Consider the following 438-residue polypeptide: Aflatoxin cluster transcriptional coactivator aflS (438 aa).

In terms of domain architecture, HTH iclR-type spans 65–134 (LALYNQLLAC…PSPGHVAHSV (70 aa)). Positions 95–114 (FEDVADIAGVPECRLRRLVR) form a DNA-binding region, H-T-H motif.

Interacts with aflR.

The protein resides in the nucleus. Transcription factor; part of the gene cluster that mediates the biosynthesis of aflatoxin, a polyketide-derived furanocoumarin which is part of the most toxic and carcinogenic compounds among the known mycotoxins. AflS exhibits no DNA-binding capability on its own, but forms a complex with the other aflatoxin cluster transcription factor aflR and acts as a modulator of aflR's DNA-binding by decreasing its DNA-binding affinity. This chain is Aflatoxin cluster transcriptional coactivator aflS, found in Aspergillus flavus (strain ATCC 200026 / FGSC A1120 / IAM 13836 / NRRL 3357 / JCM 12722 / SRRC 167).